The following is a 272-amino-acid chain: Ribonuclease HII (272 aa).

The 186-residue stretch at 87–272 folds into the RNase H type-2 domain; the sequence is KYVAGVDEVG…HRMSFLKNIL (186 aa). A divalent metal cation-binding residues include Asp-93, Glu-94, and Asp-188.

Belongs to the RNase HII family. Mn(2+) serves as cofactor. It depends on Mg(2+) as a cofactor.

The protein localises to the cytoplasm. It carries out the reaction Endonucleolytic cleavage to 5'-phosphomonoester.. Its function is as follows. Endonuclease that specifically degrades the RNA of RNA-DNA hybrids. The polypeptide is Ribonuclease HII (Clostridium perfringens (strain ATCC 13124 / DSM 756 / JCM 1290 / NCIMB 6125 / NCTC 8237 / Type A)).